The following is a 295-amino-acid chain: Ribosomal protein L11 methyltransferase (295 aa).

S-adenosyl-L-methionine is bound by residues T150, G171, D193, and N232.

Belongs to the methyltransferase superfamily. PrmA family.

It is found in the cytoplasm. It carries out the reaction L-lysyl-[protein] + 3 S-adenosyl-L-methionine = N(6),N(6),N(6)-trimethyl-L-lysyl-[protein] + 3 S-adenosyl-L-homocysteine + 3 H(+). Its function is as follows. Methylates ribosomal protein L11. The polypeptide is Ribosomal protein L11 methyltransferase (Neisseria meningitidis serogroup A / serotype 4A (strain DSM 15465 / Z2491)).